The sequence spans 336 residues: Alpha-glucoside transport system permease protein AglF (336 aa).

8 consecutive transmembrane segments (helical) span residues 4 to 24, 55 to 75, 113 to 133, 146 to 166, 176 to 196, 202 to 222, 258 to 278, and 304 to 324; these read LIAA…YFWS, PWLF…YPVV, FLWL…IAAL, LIFM…KFIY, IGLL…WITL, FFLM…ILSA, IAVV…IVLA, and FGRG…IMIW. Residues 109–325 enclose the ABC transmembrane type-1 domain; sequence IFNNFLWLLV…ILVVPIMIWN (217 aa).

Belongs to the binding-protein-dependent transport system permease family. MalFG subfamily.

The protein resides in the cell inner membrane. In terms of biological role, part of the binding-protein-dependent transport system for alpha-glucosides such as sucrose, maltose and trehalose. Probably responsible for the translocation of the substrate across the membrane. The chain is Alpha-glucoside transport system permease protein AglF (aglF) from Rhizobium meliloti (strain 1021) (Ensifer meliloti).